The chain runs to 1003 residues: Calcium-transporting ATPase sarcoplasmic/endoplasmic reticulum type (1003 aa).

The Cytoplasmic segment spans residues 1-59; the sequence is MEDAHAKKWEEVVDYFGVDPERGLALEQVKKNQEKYGPNELPAEEGKSLLTLILEQFDD. Residues 60 to 78 form a helical membrane-spanning segment; sequence LLVKILLLAAIISLVLALF. Topologically, residues 79–89 are extracellular; the sequence is EEHDDEAEQLT. The chain crosses the membrane as a helical span at residues 90 to 110; the sequence is AYVEPFVILLILIANAVVGVW. The Cytoplasmic portion of the chain corresponds to 111 to 262; the sequence is QEKNAESAIE…QQKLDEFGEQ (152 aa). Residues 263–282 form a helical membrane-spanning segment; sequence LSKVISVICVAVWAINIGHF. Topologically, residues 283 to 300 are extracellular; sequence NDPAHGGSWIKGAIYYFK. The chain crosses the membrane as a helical span at residues 301–318; sequence IAVALAVAAIPEGLPAVI. Residues 319-775 are Cytoplasmic-facing; sequence TTCLALGTRR…RYLISSNIGE (457 aa). The 4-aspartylphosphate intermediate role is filled by Asp354. Lys519 contacts ATP. A helical transmembrane segment spans residues 776-799; the sequence is VVSIFLTAALGLPEALIPVQLLWV. The Extracellular segment spans residues 800-840; that stretch reads NLVTDGLPATALGFNPPDLDIMNKPPRRADEGLITGWLFFR. A helical transmembrane segment spans residues 841–863; sequence YMAIGTYVGAATVGAAAHWFMMS. Residues 864–898 are Cytoplasmic-facing; sequence PTGPGLNFYQLSHHLQCTPENEYFEGIDCEIFSDP. Residues 899 to 917 form a helical membrane-spanning segment; that stretch reads HPMTMALSVLVTIEMLNAI. Topologically, residues 918–934 are extracellular; it reads NSLSENQSLLVMPPWSN. Residues 935-954 form a helical membrane-spanning segment; the sequence is IWLISAICLSMTLHFVILYV. Over 955 to 1003 the chain is Cytoplasmic; that stretch reads EILSTVFQICPLTLTEWIVVLKISFPVLLLDEVLKFVARKYTDEFSFIK.

It belongs to the cation transport ATPase (P-type) (TC 3.A.3) family.

The protein localises to the sarcoplasmic reticulum membrane. It catalyses the reaction Ca(2+)(in) + ATP + H2O = Ca(2+)(out) + ADP + phosphate + H(+). Functionally, this magnesium-dependent enzyme catalyzes the hydrolysis of ATP coupled with the transport of the calcium. The chain is Calcium-transporting ATPase sarcoplasmic/endoplasmic reticulum type from Artemia franciscana (Brine shrimp).